We begin with the raw amino-acid sequence, 1581 residues long: Mediator of RNA polymerase II transcription subunit 1 (1581 aa).

Residues 1–670 (MKAQGETEES…YGSSPLERQN (670 aa)) form an interaction with the Mediator complex and THRA region. Residues 16-590 (MSSLLERLHA…SIKDRHESVG (575 aa)) are interaction with ESR1. Interaction with the Mediator complex stretches follow at residues 108–212 (FYVE…GYLT) and 215–390 (SGGH…SLQG). Residues 405 to 644 (PLILNLIRHQ…MAGNTKNHPM (240 aa)) form an interaction with THRA region. The interval 542-788 (PASSPGYGMT…TDILSDIAEE (247 aa)) is interaction with VDR. A Phosphoserine modification is found at Ser-588. The LXXLL motif 1 signature appears at 604 to 608 (LTSLL). Disordered regions lie at residues 609–705 (QITG…HQTE), 791–819 (KLPS…QSTL), 868–895 (LSNS…DDFK), and 947–1566 (EHHS…DFMI). Residues 622-632 (PTPPHHTPPPV) show a composition bias toward pro residues. The interval 622–701 (PTPPHHTPPP…SSRLPPEKPK (80 aa)) is interaction with PPARGC1A and THRA. An LXXLL motif 2 motif is present at residues 645-649 (LMNLL). Residues 655-675 (QDFSTLYGSSPLERQNSSSGS) are compositionally biased toward polar residues. The interaction with ESR1 stretch occupies residues 656–1065 (DFSTLYGSSP…TPPIPKITIQ (410 aa)). Residue Ser-664 is modified to Phosphoserine. The interaction with GATA1 stretch occupies residues 681–715 (CSGSNKTKKKESSRLPPEKPKHQTEDDFQRELFSM). Residues 690 to 705 (KESSRLPPEKPKHQTE) are compositionally biased toward basic and acidic residues. Ser-794 carries the post-translational modification Phosphoserine. Phosphothreonine is present on Thr-804. A compositionally biased stretch (polar residues) spans 807–819 (RDSSSSGHSQSTL). The short motif at 874–901 (QSGFGEEYFDESSQSGDNDDFKGFASQA) is the Integrase domain-binding motif (IBM) element. A phosphoserine mark is found at Ser-886 and Ser-952. Positions 962–973 (LGKEKTQKRVKE) are enriched in basic and acidic residues. Thr-1031 carries the phosphothreonine; by MAPK1 or MAPK3 modification. The span at 1033–1050 (PTSTGGSKSPGSSGRSQT) shows a compositional bias: low complexity. Residues Thr-1050 and Thr-1056 each carry the phosphothreonine modification. Low complexity-rich tracts occupy residues 1077-1093 (SSHS…SSGS), 1100-1111 (SSSSSSSSASTS), and 1119-1156 (SEGS…PGSS). At Ser-1156 the chain carries Phosphoserine. Residues 1162 to 1195 (GLSSGSSSTKMKPQGKPSSLMNPSLSKPNISPSH) are compositionally biased toward polar residues. At Lys-1177 the chain carries N6-acetyllysine. Ser-1207 is modified (phosphoserine). At Thr-1215 the chain carries Phosphothreonine. 2 stretches are compositionally biased toward low complexity: residues 1218–1227 (SSKAKSPISS) and 1234–1293 (MSGT…SKGK). Ser-1223 bears the Phosphoserine mark. The interval 1249–1421 (LGSSGSLSQK…KPGESSGEGL (173 aa)) is interaction with TP53. At Ser-1302 the chain carries Phosphoserine. Positions 1330–1345 (GVSTNSSSHPMSSKHN) are enriched in polar residues. Ser-1347 carries the post-translational modification Phosphoserine. The segment covering 1352-1364 (QGKREKSDKDKSK) has biased composition (basic and acidic residues). 2 positions are modified to phosphoserine: Ser-1403 and Ser-1433. Polar residues-rich tracts occupy residues 1425 to 1440 (MASS…SGST) and 1448 to 1482 (PSHS…SPSS). Position 1440 is a phosphothreonine (Thr-1440). Thr-1457 bears the Phosphothreonine; by MAPK1 or MAPK3 mark. 5 positions are modified to phosphoserine: Ser-1463, Ser-1465, Ser-1479, Ser-1481, and Ser-1482. Residues 1496–1505 (KHKKHKKEKK) are compositionally biased toward basic residues. The span at 1506-1522 (KVKDKDRDRDRDKDRDK) shows a compositional bias: basic and acidic residues. Lys-1529 carries the post-translational modification N6-acetyllysine. Residues 1533–1552 (WSKSPISSDQSLSMTSNTIL) are compositionally biased toward polar residues.

This sequence belongs to the Mediator complex subunit 1 family. In terms of assembly, component of the Mediator complex, which is composed of MED1, MED4, MED6, MED7, MED8, MED9, MED10, MED11, MED12, MED13, MED13L, MED14, MED15, MED16, MED17, MED18, MED19, MED20, MED21, MED22, MED23, MED24, MED25, MED26, MED27, MED29, MED30, MED31, CCNC, CDK8 and CDC2L6/CDK11. The MED12, MED13, CCNC and CDK8 subunits form a distinct module termed the CDK8 module. Mediator containing the CDK8 module is less active than Mediator lacking this module in supporting transcriptional activation. Individual preparations of the Mediator complex lacking one or more distinct subunits have been variously termed ARC, CRSP, DRIP, PC2, SMCC and TRAP. This subunit specifically interacts with a number of nuclear receptors in a ligand-dependent fashion including AR, ESR1, ESR2, PPARA, PPARG, RORA, RXRA, RXRG, THRA, THRB and VDR. Interacts with CTNNB1, GABPA, GLI3, PPARGC1A and TP53. Interacts with GATA1 and YWHAH. Interacts with CLOCK; this interaction requires the presence of THRAP3. Interacts with CCAR1. Interacts with NR4A3. Interacts (via IBM motif) with PSIP1 (via IBD domain); phosphorylation increases its affinity for PSIP1. Interacts with USP22. In terms of processing, phosphorylated by MAPK1 or MAPK3 during G2/M phase which may enhance protein stability and promote entry into the nucleolus. Phosphorylation increases its interaction with PSIP1.

The protein resides in the nucleus. In terms of biological role, component of the Mediator complex, a coactivator involved in the regulated transcription of nearly all RNA polymerase II-dependent genes. Mediator functions as a bridge to convey information from gene-specific regulatory proteins to the basal RNA polymerase II transcription machinery. Mediator is recruited to promoters by direct interactions with regulatory proteins and serves as a scaffold for the assembly of a functional preinitiation complex with RNA polymerase II and the general transcription factors. Acts as a coactivator for GATA1-mediated transcriptional activation during erythroid differentiation of K562 erythroleukemia cells. This chain is Mediator of RNA polymerase II transcription subunit 1 (MED1), found in Pongo abelii (Sumatran orangutan).